Here is a 55-residue protein sequence, read N- to C-terminus: Caltrin-like protein 2 (55 aa).

The region spanning 7–55 (AINRPGSCPRVMIYCPARHPPNKCTSDYDCPKPQKCCPGYCGKQCYQPE) is the WAP domain.

In terms of processing, glycosylated.

Functionally, inhibits calcium transport into spermatozoa. In Cavia porcellus (Guinea pig), this protein is Caltrin-like protein 2.